A 138-amino-acid chain; its full sequence is Actophorin (138 aa).

The ADF-H domain occupies 3–134 (GIQLADEVTS…NLDEVIAKVK (132 aa)).

It belongs to the actin-binding proteins ADF family. Interacts with F-actin. Does not interact with G-actin. Interacts with 14-3-3 protein 3.

The protein resides in the cytoplasm. The protein localises to the cytoskeleton. It is found in the cell membrane. It localises to the cell projection. Its subcellular location is the phagocytic cup. The protein resides in the pseudopodium. Functionally, actin-binding protein that severs actin filaments. The protein is Actophorin of Entamoeba histolytica (strain ATCC 30459 / HM-1:IMSS / ABRM).